The sequence spans 191 residues: Protein Ves (191 aa).

Belongs to the Ves family.

This chain is Protein Ves, found in Citrobacter koseri (strain ATCC BAA-895 / CDC 4225-83 / SGSC4696).